A 72-amino-acid chain; its full sequence is DNA-directed RNA polymerase subunit omega (72 aa).

The protein belongs to the RNA polymerase subunit omega family. The RNAP catalytic core consists of 2 alpha, 1 beta, 1 beta' and 1 omega subunit. When a sigma factor is associated with the core the holoenzyme is formed, which can initiate transcription.

It carries out the reaction RNA(n) + a ribonucleoside 5'-triphosphate = RNA(n+1) + diphosphate. Functionally, promotes RNA polymerase assembly. Latches the N- and C-terminal regions of the beta' subunit thereby facilitating its interaction with the beta and alpha subunits. The chain is DNA-directed RNA polymerase subunit omega from Francisella tularensis subsp. tularensis (strain FSC 198).